The sequence spans 633 residues: General amino acid permease AGP1 (633 aa).

The Cytoplasmic portion of the chain corresponds to 1-124 (MSSSKSLYEL…SLKKTIQPRH (124 aa)). Ser6 is modified (phosphoserine). A Glycyl lysine isopeptide (Lys-Gly) (interchain with G-Cter in ubiquitin) cross-link involves residue Lys11. Disordered stretches follow at residues 32 to 52 (FETGSNDRPSSQPHLGYEQHN) and 86 to 116 (ISPSSRQAQELEKNESSDNIGANTGHKSDSL). A compositionally biased stretch (polar residues) spans 34 to 52 (TGSNDRPSSQPHLGYEQHN). Residues 125-145 (VLMIALGTGIGTGLLVGNGTA) form a helical membrane-spanning segment. Topologically, residues 146–148 (LVH) are extracellular. The helical transmembrane segment at 149-169 (AGPAGLLIGYAIMGSILYCII) threads the bilayer. Residues 170 to 197 (QACGEMALVYSNLTGGYNAYPSFLVDDG) are Cytoplasmic-facing. The helical transmembrane segment at 198–218 (FGFAVAWVYCLQWLCVCPLEL) threads the bilayer. Residues 219 to 231 (VTASMTIKYWTTS) lie on the Extracellular side of the membrane. The chain crosses the membrane as a helical span at residues 232–252 (VNPDVFVIIFYVLVITINIFG). The Cytoplasmic segment spans residues 253–260 (ARGYAEAE). Residues 261 to 281 (FFFNCCKILMMTGFFILGIII) form a helical membrane-spanning segment. Topologically, residues 282–313 (DVGGAGNDGFIGGKYWHDPGAFNGKHAIDRFK) are extracellular. A helical transmembrane segment spans residues 314-334 (GVAATLVTAAFAFGGSEFIAI). Residues 335–352 (TTAEQSNPRKAIPGAAKQ) are Cytoplasmic-facing. Residues 353–373 (MIYRILFLFLATIILLGFLVP) traverse the membrane as a helical segment. Residues 374 to 402 (YNSDQLLGSTGGGTKASPYVIAVASHGVR) are Extracellular-facing. Residues 403–425 (VVPHFINAVILLSVLSMANSSFY) traverse the membrane as a helical segment. Over 426 to 452 (SSARLFLTLSEQGYAPKVFSYIDRAGR) the chain is Cytoplasmic. The helical transmembrane segment at 453–473 (PLIAMGVSALFAVIAFCAASP) threads the bilayer. Over 474–477 (KEEQ) the chain is Extracellular. A helical membrane pass occupies residues 478-498 (VFTWLLAISGLSQLFTWTAIC). Topologically, residues 499-531 (LSHLRFRRAMKVQGRSLGELGFKSQTGVWGSAY) are cytoplasmic. A helical transmembrane segment spans residues 532-552 (ACIMMILILIAQFWVAIAPIG). At 553–560 (EGKLDAQA) the chain is on the extracellular side. Residues 561 to 581 (FFENYLAMPILIALYVGYKVW) traverse the membrane as a helical segment. Topologically, residues 582-633 (HKDWKLFIRADKIDLDSHRQIFDEELIKQEDEEYRERLRNGPYWKRVVAFWC) are cytoplasmic. Residue Cys633 is the site of S-palmitoyl cysteine attachment.

This sequence belongs to the amino acid-polyamine-organocation (APC) superfamily. YAT (TC 2.A.3.10) family. In terms of processing, palmitoylated by PFA4.

It is found in the cell membrane. Functionally, broad substrate range permease which transports asparagine and glutamine with intermediate specificity. Also transports Ala, Cys, Gly, Ile, Leu, Met, Phe, Ser, Thr, Tyr and Val. Important for the utilization of amino acids as a nitrogen source. This chain is General amino acid permease AGP1 (AGP1), found in Saccharomyces cerevisiae (strain ATCC 204508 / S288c) (Baker's yeast).